The sequence spans 103 residues: Large ribosomal subunit protein uL24 (103 aa).

This sequence belongs to the universal ribosomal protein uL24 family. In terms of assembly, part of the 50S ribosomal subunit.

One of two assembly initiator proteins, it binds directly to the 5'-end of the 23S rRNA, where it nucleates assembly of the 50S subunit. Its function is as follows. One of the proteins that surrounds the polypeptide exit tunnel on the outside of the subunit. This is Large ribosomal subunit protein uL24 from Mannheimia succiniciproducens (strain KCTC 0769BP / MBEL55E).